The sequence spans 96 residues: UPF0235 protein CKO_04329 (96 aa).

It belongs to the UPF0235 family.

This Citrobacter koseri (strain ATCC BAA-895 / CDC 4225-83 / SGSC4696) protein is UPF0235 protein CKO_04329.